Here is a 143-residue protein sequence, read N- to C-terminus: Large ribosomal subunit protein uL11 (143 aa).

The protein belongs to the universal ribosomal protein uL11 family. In terms of assembly, part of the ribosomal stalk of the 50S ribosomal subunit. Interacts with L10 and the large rRNA to form the base of the stalk. L10 forms an elongated spine to which L12 dimers bind in a sequential fashion forming a multimeric L10(L12)X complex. Post-translationally, one or more lysine residues are methylated.

In terms of biological role, forms part of the ribosomal stalk which helps the ribosome interact with GTP-bound translation factors. In Janthinobacterium sp. (strain Marseille) (Minibacterium massiliensis), this protein is Large ribosomal subunit protein uL11.